The primary structure comprises 366 residues: Ribosomal RNA large subunit methyltransferase M (366 aa).

Residues serine 188, 221 to 224 (CPGG), aspartate 240, aspartate 260, and aspartate 277 each bind S-adenosyl-L-methionine. The active-site Proton acceptor is the lysine 306.

The protein belongs to the class I-like SAM-binding methyltransferase superfamily. RNA methyltransferase RlmE family. RlmM subfamily. In terms of assembly, monomer.

The protein resides in the cytoplasm. It carries out the reaction cytidine(2498) in 23S rRNA + S-adenosyl-L-methionine = 2'-O-methylcytidine(2498) in 23S rRNA + S-adenosyl-L-homocysteine + H(+). Its function is as follows. Catalyzes the 2'-O-methylation at nucleotide C2498 in 23S rRNA. The chain is Ribosomal RNA large subunit methyltransferase M from Sodalis glossinidius (strain morsitans).